Consider the following 67-residue polypeptide: DNA gyrase inhibitor YacG (67 aa).

Positions 8, 11, 27, and 31 each coordinate Zn(2+).

It belongs to the DNA gyrase inhibitor YacG family. Interacts with GyrB. Zn(2+) serves as cofactor.

Its function is as follows. Inhibits all the catalytic activities of DNA gyrase by preventing its interaction with DNA. Acts by binding directly to the C-terminal domain of GyrB, which probably disrupts DNA binding by the gyrase. This is DNA gyrase inhibitor YacG from Ralstonia pickettii (strain 12J).